A 350-amino-acid polypeptide reads, in one-letter code: UBX domain-containing protein 2B (350 aa).

A compositionally biased stretch (acidic residues) spans 1–29; it reads MEERENSEEGDDGAGEEEEEDQGSGEDGG. Residues 1–46 form a disordered region; sequence MEERENSEEGDDGAGEEEEEDQGSGEDGGEVGAEREQEAELKDSLR. Residues 32–45 are compositionally biased toward basic and acidic residues; sequence GAEREQEAELKDSL. The region spanning 160-225 is the SEP domain; the sequence is EIQILLKLWS…MEDHQDQEYI (66 aa). The UBX domain maps to 271–348; the sequence is EHVPTTKIQI…DILNTVILQR (78 aa).

This sequence belongs to the NSFL1C family.

It is found in the nucleus. It localises to the cytoplasm. The protein resides in the cytosol. The protein localises to the endoplasmic reticulum. Its subcellular location is the golgi apparatus. It is found in the cytoskeleton. It localises to the microtubule organizing center. The protein resides in the centrosome. In terms of biological role, adapter protein required for Golgi and endoplasmic reticulum biogenesis. Involved in Golgi and endoplasmic reticulum maintenance during interphase and in their reassembly at the end of mitosis. Regulates the centrosomal levels of kinase aurka-a/Aurora A during mitotic progression by promoting aurka-a removal from centrosomes in prophase. Also, regulates spindle orientation during mitosis. This Xenopus laevis (African clawed frog) protein is UBX domain-containing protein 2B (ubxn2b).